The chain runs to 542 residues: Chondroitin sulfate N-acetylgalactosaminyltransferase 2 (542 aa).

The Cytoplasmic portion of the chain corresponds to 1–11 (MPRRGLILHTR). A helical; Signal-anchor for type II membrane protein membrane pass occupies residues 12–32 (THWLLLGLALLCSLVLFMYLL). Residues 33-542 (ECAPQTDGNA…AYRTNSEAVG (510 aa)) lie on the Lumenal side of the membrane. Asn41 carries N-linked (GlcNAc...) asparagine glycosylation. A coiled-coil region spans residues 59 to 105 (ALLQEQEEHYQTRATSLKRQIAQLKQELQEMSEKMRSLQERRNVGAN). Asn333 is a glycosylation site (N-linked (GlcNAc...) asparagine). Residues Asp369 and His486 each coordinate a divalent metal cation.

This sequence belongs to the chondroitin N-acetylgalactosaminyltransferase family. Ubiquitous.

The protein resides in the golgi apparatus. It localises to the golgi stack membrane. It catalyses the reaction 3-O-(beta-D-GlcA-(1-&gt;3)-beta-D-Gal-(1-&gt;3)-beta-D-Gal-(1-&gt;4)-beta-D-Xyl)-L-seryl-[protein] + UDP-N-acetyl-alpha-D-galactosamine = 3-O-(beta-D-GalNAc-(1-&gt;4)-beta-D-GlcA-(1-&gt;3)-beta-D-Gal-(1-&gt;3)-beta-D-Gal-(1-&gt;4)-beta-D-Xyl)-L-seryl-[protein] + UDP + H(+). In terms of biological role, transfers 1,4-N-acetylgalactosamine (GalNAc) from UDP-GalNAc to the non-reducing end of glucuronic acid (GlcUA). Required for addition of the first GalNAc to the core tetrasaccharide linker and for elongation of chondroitin chains. The chain is Chondroitin sulfate N-acetylgalactosaminyltransferase 2 (CSGALNACT2) from Homo sapiens (Human).